The primary structure comprises 79 residues: Delta-hormotoxin-Cpt1a (79 aa).

A signal peptide spans 1 to 20; it reads MKTQVLAVFVLCVLFCLAES. Residues 21–31 constitute a propeptide that is removed on maturation; it reads RTTLNKRIDIA. Cystine bridges form between C36–C75, C38–C66, and C56–C76.

It belongs to the sea anemone sodium channel inhibitory toxin family.

Its subcellular location is the secreted. It is found in the nematocyst. In neuromuscular preparation of crustaceans, the toxin increased neurotransmitter release, causing repetitive firing of the axons. May affect sodium channels (Nav). This chain is Delta-hormotoxin-Cpt1a, found in Calliactis parasitica (Sea anemone).